The chain runs to 115 residues: Holo-[acyl-carrier-protein] synthase (115 aa).

Mg(2+) is bound by residues Asp6 and Glu51.

Belongs to the P-Pant transferase superfamily. AcpS family. Mg(2+) is required as a cofactor.

It is found in the cytoplasm. It carries out the reaction apo-[ACP] + CoA = holo-[ACP] + adenosine 3',5'-bisphosphate + H(+). In terms of biological role, transfers the 4'-phosphopantetheine moiety from coenzyme A to a Ser of acyl-carrier-protein. The sequence is that of Holo-[acyl-carrier-protein] synthase from Campylobacter jejuni subsp. jejuni serotype O:6 (strain 81116 / NCTC 11828).